The chain runs to 273 residues: WIMGHMVNSISQIKQFVNPGANAIEIDITFDSDAKAEYTYHKVPCDCFRTCGKWEYIDEYLKAVRNATTRGNRKYLRQLVLLIFDLKTSSLNRSTAYDAGKDFAERLLEHYWNNGENGGRAYVVLSIPNVRHYKFIIGFPDALNSEGHSELMQKVGYDFSGNDDLETIRRALRYAGVKGKNHIWQSDGITNCLSRTLKRVRKAVENRDSSDGYINKVYYWTVDKYATIRDTLDAEVDGIMTNYPNRVVDVLKEKCYSSRFRLATYSDNPFETF.

H5 is an active-site residue. E25 and D27 together coordinate Mg(2+). The active-site Nucleophile is H41. 2 disulfide bridges follow: C45–C51 and C47–C192. D85 lines the Mg(2+) pocket.

The protein belongs to the arthropod phospholipase D family. Class II subfamily. Mg(2+) is required as a cofactor. As to expression, expressed by the venom gland.

It localises to the secreted. It catalyses the reaction an N-(acyl)-sphingosylphosphocholine = an N-(acyl)-sphingosyl-1,3-cyclic phosphate + choline. It carries out the reaction an N-(acyl)-sphingosylphosphoethanolamine = an N-(acyl)-sphingosyl-1,3-cyclic phosphate + ethanolamine. The catalysed reaction is a 1-acyl-sn-glycero-3-phosphocholine = a 1-acyl-sn-glycero-2,3-cyclic phosphate + choline. The enzyme catalyses a 1-acyl-sn-glycero-3-phosphoethanolamine = a 1-acyl-sn-glycero-2,3-cyclic phosphate + ethanolamine. In terms of biological role, dermonecrotic toxins cleave the phosphodiester linkage between the phosphate and headgroup of certain phospholipids (sphingolipid and lysolipid substrates), forming an alcohol (often choline) and a cyclic phosphate. This toxin acts on sphingomyelin (SM). It may also act on ceramide phosphoethanolamine (CPE), lysophosphatidylcholine (LPC) and lysophosphatidylethanolamine (LPE), but not on lysophosphatidylserine (LPS), and lysophosphatidylglycerol (LPG). It acts by transphosphatidylation, releasing exclusively cyclic phosphate products as second products. Induces dermonecrosis, hemolysis, increased vascular permeability, edema, inflammatory response, and platelet aggregation. In Loxosceles arizonica (Arizona brown spider), this protein is Dermonecrotic toxin LarSicTox-alphaVII1.